A 449-amino-acid chain; its full sequence is Bifunctional protein GlmU (449 aa).

The pyrophosphorylase stretch occupies residues methionine 1–cysteine 231. UDP-N-acetyl-alpha-D-glucosamine contacts are provided by residues leucine 10 to glycine 13, lysine 24, glutamine 77, and glycine 82 to threonine 83. Position 107 (aspartate 107) interacts with Mg(2+). UDP-N-acetyl-alpha-D-glucosamine contacts are provided by glycine 143, glutamate 157, asparagine 172, and asparagine 229. Asparagine 229 is a Mg(2+) binding site. Positions phenylalanine 232 to serine 252 are linker. The interval glycine 253–lysine 449 is N-acetyltransferase. The UDP-N-acetyl-alpha-D-glucosamine site is built by arginine 318 and lysine 336. Histidine 348 functions as the Proton acceptor in the catalytic mechanism. Tyrosine 351 and asparagine 362 together coordinate UDP-N-acetyl-alpha-D-glucosamine. Acetyl-CoA contacts are provided by residues alanine 365, asparagine 371 to tyrosine 372, serine 390, serine 408, and arginine 425.

It in the N-terminal section; belongs to the N-acetylglucosamine-1-phosphate uridyltransferase family. The protein in the C-terminal section; belongs to the transferase hexapeptide repeat family. As to quaternary structure, homotrimer. The cofactor is Mg(2+).

The protein resides in the cytoplasm. The enzyme catalyses alpha-D-glucosamine 1-phosphate + acetyl-CoA = N-acetyl-alpha-D-glucosamine 1-phosphate + CoA + H(+). It carries out the reaction N-acetyl-alpha-D-glucosamine 1-phosphate + UTP + H(+) = UDP-N-acetyl-alpha-D-glucosamine + diphosphate. Its pathway is nucleotide-sugar biosynthesis; UDP-N-acetyl-alpha-D-glucosamine biosynthesis; N-acetyl-alpha-D-glucosamine 1-phosphate from alpha-D-glucosamine 6-phosphate (route II): step 2/2. It participates in nucleotide-sugar biosynthesis; UDP-N-acetyl-alpha-D-glucosamine biosynthesis; UDP-N-acetyl-alpha-D-glucosamine from N-acetyl-alpha-D-glucosamine 1-phosphate: step 1/1. The protein operates within bacterial outer membrane biogenesis; LPS lipid A biosynthesis. Its function is as follows. Catalyzes the last two sequential reactions in the de novo biosynthetic pathway for UDP-N-acetylglucosamine (UDP-GlcNAc). The C-terminal domain catalyzes the transfer of acetyl group from acetyl coenzyme A to glucosamine-1-phosphate (GlcN-1-P) to produce N-acetylglucosamine-1-phosphate (GlcNAc-1-P), which is converted into UDP-GlcNAc by the transfer of uridine 5-monophosphate (from uridine 5-triphosphate), a reaction catalyzed by the N-terminal domain. The chain is Bifunctional protein GlmU from Bartonella bacilliformis (strain ATCC 35685 / KC583 / Herrer 020/F12,63).